Reading from the N-terminus, the 81-residue chain is Small ribosomal subunit protein bS16 (81 aa).

It belongs to the bacterial ribosomal protein bS16 family.

This is Small ribosomal subunit protein bS16 from Lachnospira eligens (strain ATCC 27750 / DSM 3376 / VPI C15-48 / C15-B4) (Eubacterium eligens).